We begin with the raw amino-acid sequence, 422 residues long: Serine--tRNA ligase (422 aa).

Residue 229–231 (TAE) participates in L-serine binding. 260–262 (RKE) provides a ligand contact to ATP. Glu-283 contributes to the L-serine binding site. 347-350 (EISS) contacts ATP. Ser-383 lines the L-serine pocket.

The protein belongs to the class-II aminoacyl-tRNA synthetase family. Type-1 seryl-tRNA synthetase subfamily. In terms of assembly, homodimer. The tRNA molecule binds across the dimer.

It localises to the cytoplasm. It catalyses the reaction tRNA(Ser) + L-serine + ATP = L-seryl-tRNA(Ser) + AMP + diphosphate + H(+). It carries out the reaction tRNA(Sec) + L-serine + ATP = L-seryl-tRNA(Sec) + AMP + diphosphate + H(+). The protein operates within aminoacyl-tRNA biosynthesis; selenocysteinyl-tRNA(Sec) biosynthesis; L-seryl-tRNA(Sec) from L-serine and tRNA(Sec): step 1/1. Catalyzes the attachment of serine to tRNA(Ser). Is also able to aminoacylate tRNA(Sec) with serine, to form the misacylated tRNA L-seryl-tRNA(Sec), which will be further converted into selenocysteinyl-tRNA(Sec). The chain is Serine--tRNA ligase from Natranaerobius thermophilus (strain ATCC BAA-1301 / DSM 18059 / JW/NM-WN-LF).